The primary structure comprises 554 residues: Protein translocase subunit SecD (554 aa).

The next 6 helical transmembrane spans lie at L10–A30, A392–Y412, L414–M434, G435–T455, A491–A511, and G516–V536.

It belongs to the SecD/SecF family. SecD subfamily. Forms a complex with SecF. Part of the essential Sec protein translocation apparatus which comprises SecA, SecYEG and auxiliary proteins SecDF-YajC and YidC.

It is found in the cell inner membrane. Its function is as follows. Part of the Sec protein translocase complex. Interacts with the SecYEG preprotein conducting channel. SecDF uses the proton motive force (PMF) to complete protein translocation after the ATP-dependent function of SecA. The protein is Protein translocase subunit SecD of Rhodobacter capsulatus (strain ATCC BAA-309 / NBRC 16581 / SB1003).